The following is a 948-amino-acid chain: Alanine--tRNA ligase (948 aa).

Residues His638, His642, Cys739, and His743 each coordinate Zn(2+).

This sequence belongs to the class-II aminoacyl-tRNA synthetase family. The cofactor is Zn(2+).

Its subcellular location is the cytoplasm. The enzyme catalyses tRNA(Ala) + L-alanine + ATP = L-alanyl-tRNA(Ala) + AMP + diphosphate. Functionally, catalyzes the attachment of alanine to tRNA(Ala) in a two-step reaction: alanine is first activated by ATP to form Ala-AMP and then transferred to the acceptor end of tRNA(Ala). Also edits incorrectly charged Ser-tRNA(Ala) and Gly-tRNA(Ala) via its editing domain. The polypeptide is Alanine--tRNA ligase (Paracidovorax citrulli (strain AAC00-1) (Acidovorax citrulli)).